A 399-amino-acid polypeptide reads, in one-letter code: Bombesin receptor subtype-3 (399 aa).

Residues 1–31 (MSQRQPQSPNQTLISTTNDTESSSSVVPNDS) are compositionally biased toward polar residues. Positions 1–38 (MSQRQPQSPNQTLISTTNDTESSSSVVPNDSTNKRRTG) are disordered. The Extracellular portion of the chain corresponds to 1–41 (MSQRQPQSPNQTLISTTNDTESSSSVVPNDSTNKRRTGDNS). N-linked (GlcNAc...) asparagine glycosylation is found at Asn10, Asn18, and Asn29. The chain crosses the membrane as a helical span at residues 42–63 (PGIEALCAIYITYAVIISVGIL). Over 64 to 82 (GNAILIKVFFKTKSMQTVP) the chain is Cytoplasmic. The helical transmembrane segment at 83–103 (NIFITSLAFGDLLLLLTCVPV) threads the bilayer. The Extracellular segment spans residues 104 to 121 (DVTHYLAEGWLFGRIGCK). A disulfide bridge connects residues Cys120 and Cys203. Residues 122–143 (VLSFIRLTSVGVSVFTLTILSA) form a helical membrane-spanning segment. At 144 to 163 (DRYKAVVKPLERQPPNAILK) the chain is on the cytoplasmic side. Residues 164–184 (TCAKAGCIWIMSMIIALPEAI) traverse the membrane as a helical segment. Topologically, residues 185 to 220 (FSNVYTFQDPDKNVTFKACASYPVSERLLQEIHSLL) are extracellular. Residues 221–241 (CFLVFYIIPLSIISVYYSLIA) traverse the membrane as a helical segment. Residues 242–272 (RTLYKSTLNIPTEEQRHARKQIESRKRIAKT) lie on the Cytoplasmic side of the membrane. The chain crosses the membrane as a helical span at residues 273–293 (VLVLVALFALCWLPNHLLYLY). Over 294–313 (RSFTSQTYMDSSTVHLFVTI) the chain is Extracellular. A helical membrane pass occupies residues 314–333 (ISRILAFSNSCVNPFALYWL). Topologically, residues 334 to 399 (SNTFQQHFKA…CSVKKEDDRV (66 aa)) are cytoplasmic.

This sequence belongs to the G-protein coupled receptor 1 family. As to quaternary structure, interacts with C6orf89.

It is found in the cell membrane. Functionally, role in sperm cell division, maturation, or function. This receptor mediates its action by association with G proteins that activate a phosphatidylinositol-calcium second messenger system. The polypeptide is Bombesin receptor subtype-3 (BRS3) (Ovis aries (Sheep)).